The sequence spans 657 residues: PAN2-PAN3 deadenylation complex subunit PAN3 (657 aa).

Disordered stretches follow at residues 1-29, 52-98, and 115-135; these read MASAGKPNIDDGRRGTSSPKLKGRDHAKD, HDPS…SATI, and SRSNAATPQSQPETSTPEWSI. The C3H1-type zinc-finger motif lies at 27–55; sequence AKDTLCRNVTIYGRCRYEDKGCVFNHDPS. Positions 52 to 67 are enriched in basic and acidic residues; sequence HDPSRVNDAQHPERSS. Polar residues-rich tracts occupy residues 75 to 98 and 115 to 132; these read DSPSFTPSATPLNGSSGLKKSATI and SRSNAATPQSQPETSTPE. Residues 259-521 are pseudokinase domain; sequence QTLPNSQLPT…TIDIFISGIS (263 aa). ATP is bound by residues arginine 311, 360-367, and 421-422; these read DYHPLSKT and SK. The stretch at 522-560 forms a coiled coil; sequence SQLMSTFDSSLHLDDQLISDLSRELENARLVRLLTKLNF. A knob domain region spans residues 561–657; sequence INERPEYEHD…QALLKPARRI (97 aa).

This sequence belongs to the protein kinase superfamily. PAN3 family. As to quaternary structure, homodimer. Forms a heterotrimer with a catalytic subunit PAN2 to form the poly(A)-nuclease (PAN) deadenylation complex. Interacts (via PAM-2 motif) with poly(A)-binding protein PAB1 (via PABC domain), conferring substrate specificity of the enzyme complex.

Its subcellular location is the cytoplasm. Its function is as follows. Regulatory subunit of the poly(A)-nuclease (PAN) deadenylation complex, one of two cytoplasmic mRNA deadenylases involved in mRNA turnover. PAN specifically shortens poly(A) tails of RNA and the activity is stimulated by poly(A)-binding protein PAB1. PAN deadenylation is followed by rapid degradation of the shortened mRNA tails by the CCR4-NOT complex. Deadenylated mRNAs are then degraded by two alternative mechanisms, namely exosome-mediated 3'-5' exonucleolytic degradation, or deadenylation-dependent mRNA decaping and subsequent 5'-3' exonucleolytic degradation by XRN1. May also be involved in post-transcriptional maturation of mRNA poly(A) tails. PAN3 acts as a positive regulator for PAN activity, recruiting the catalytic subunit PAN2 to mRNA via its interaction with RNA and with PAB1. The sequence is that of PAN2-PAN3 deadenylation complex subunit PAN3 from Coccidioides immitis (strain RS) (Valley fever fungus).